The sequence spans 189 residues: Small heat shock protein 21 (189 aa).

The disordered stretch occupies residues 26 to 53; sequence PPNFNPRKIAQGDNGKGQQVSRYGAGAG. In terms of domain architecture, sHSP spans 77–183; sequence KYFVGFDDNV…HEKIVNIPIS (107 aa).

This sequence belongs to the small heat shock protein (HSP20) family.

In terms of biological role, heat shock protein required for pathogenicity. Mediates thermotolerance and adaptation to oxidative stress and ethanol-induced stress. Required for invasive growth and filament formation under various filament inducing conditions. Plays a role in the capacity of damaging human-derived endothelial and oral epithelial cells during infection. Potentiates resistance to antifungal drugs, as well as resistance to killing by human neutrophils. Plays a major role in trehalose homeostasis in response to elevated temperatures. Regulates CEK1 activation by phosphorylation in response to elevated temperatures. In Candida albicans (strain SC5314 / ATCC MYA-2876) (Yeast), this protein is Small heat shock protein 21 (HSP21).